A 619-amino-acid chain; its full sequence is Protein CPn_1016/CP_0837/CPj1016/CpB1054 (619 aa).

The tract at residues asparagine 591–leucine 619 is disordered.

Belongs to the chlamydial CPn_1016/CT_858/TC_0248 family.

This is Protein CPn_1016/CP_0837/CPj1016/CpB1054 from Chlamydia pneumoniae (Chlamydophila pneumoniae).